Reading from the N-terminus, the 210-residue chain is Prolactin (210 aa).

Positions 1–23 are cleaved as a signal peptide; sequence MARRSQGTKLHLAVLCLVVSCHA. 2 disulfides stabilise this stretch: Cys69–Cys183 and Cys200–Cys210.

This sequence belongs to the somatotropin/prolactin family.

It is found in the secreted. The protein is Prolactin (prl) of Oncorhynchus mykiss (Rainbow trout).